The sequence spans 206 residues: Crossover junction endodeoxyribonuclease RuvC (206 aa).

Active-site residues include aspartate 7, glutamate 67, and aspartate 138. Aspartate 7, glutamate 67, and aspartate 138 together coordinate Mg(2+).

The protein belongs to the RuvC family. Homodimer which binds Holliday junction (HJ) DNA. The HJ becomes 2-fold symmetrical on binding to RuvC with unstacked arms; it has a different conformation from HJ DNA in complex with RuvA. In the full resolvosome a probable DNA-RuvA(4)-RuvB(12)-RuvC(2) complex forms which resolves the HJ. The cofactor is Mg(2+).

It localises to the cytoplasm. It catalyses the reaction Endonucleolytic cleavage at a junction such as a reciprocal single-stranded crossover between two homologous DNA duplexes (Holliday junction).. In terms of biological role, the RuvA-RuvB-RuvC complex processes Holliday junction (HJ) DNA during genetic recombination and DNA repair. Endonuclease that resolves HJ intermediates. Cleaves cruciform DNA by making single-stranded nicks across the HJ at symmetrical positions within the homologous arms, yielding a 5'-phosphate and a 3'-hydroxyl group; requires a central core of homology in the junction. The consensus cleavage sequence is 5'-(A/T)TT(C/G)-3'. Cleavage occurs on the 3'-side of the TT dinucleotide at the point of strand exchange. HJ branch migration catalyzed by RuvA-RuvB allows RuvC to scan DNA until it finds its consensus sequence, where it cleaves and resolves the cruciform DNA. This chain is Crossover junction endodeoxyribonuclease RuvC, found in Anaeromyxobacter sp. (strain Fw109-5).